We begin with the raw amino-acid sequence, 338 residues long: Phenylalanine--tRNA ligase alpha subunit (338 aa).

Mg(2+) is bound at residue E252.

The protein belongs to the class-II aminoacyl-tRNA synthetase family. Phe-tRNA synthetase alpha subunit type 1 subfamily. In terms of assembly, tetramer of two alpha and two beta subunits. Mg(2+) is required as a cofactor.

The protein resides in the cytoplasm. It carries out the reaction tRNA(Phe) + L-phenylalanine + ATP = L-phenylalanyl-tRNA(Phe) + AMP + diphosphate + H(+). This is Phenylalanine--tRNA ligase alpha subunit from Pseudomonas paraeruginosa (strain DSM 24068 / PA7) (Pseudomonas aeruginosa (strain PA7)).